The sequence spans 861 residues: Protein argonaute-4 (861 aa).

In terms of domain architecture, PAZ spans 219 to 338; that stretch reads PIIEFMCEVL…LPLEVCNIVA (120 aa). Residues 509-820 form the Piwi domain; that stretch reads LIVVILPGKT…VAFRARYHLV (312 aa). The disordered stretch occupies residues 825-846; it reads DSAEGSHVSGQSNGRDPQALAK.

Belongs to the argonaute family. Ago subfamily. Interacts with EIF4B, IMP8, PRMT5, TNRC6A and TNRC6B. Interacts with ZFP36. In terms of processing, ubiquitinated on surface-exposed lysines by a SCF-like E3 ubiquitin-protein ligase complex containing ZSWIM8 during target-directed microRNA degradation (TDMD), a process that mediates degradation of microRNAs (miRNAs). Ubiquitination by the SCF-like E3 ubiquitin-protein ligase complex containing ZSWIM8 leads to its subsequent degradation, thereby exposing miRNAs for degradation. ZSWIM8 recognizes and binds AGO4 when it is engaged with a TDMD target.

Its subcellular location is the cytoplasm. The protein resides in the P-body. Functionally, required for RNA-mediated gene silencing (RNAi). Binds to short RNAs such as microRNAs (miRNAs) and represses the translation of mRNAs which are complementary to them. Lacks endonuclease activity and does not appear to cleave target mRNAs. In Mus musculus (Mouse), this protein is Protein argonaute-4 (Ago4).